The following is a 693-amino-acid chain: Serine/threonine-protein kinase Pkn1 (693 aa).

A Protein kinase domain is found at 59–328 (FRLVRRLGRG…QVALAEHVRV (270 aa)). ATP is bound by residues 65 to 73 (LGRGGMGAV) and lysine 88. Residue aspartate 180 is the Proton acceptor of the active site. The 99-residue stretch at 393–491 (LVEVPVQVVL…LKAAVDALLQ (99 aa)) folds into the PilZ domain. Residues 630–663 (ARSHFQSGGALERDGQLSQALDQYERGLKLAPLE) form a TPR repeat.

The protein belongs to the protein kinase superfamily. Ser/Thr protein kinase family. Autophosphorylated.

The enzyme catalyses L-seryl-[protein] + ATP = O-phospho-L-seryl-[protein] + ADP + H(+). It catalyses the reaction L-threonyl-[protein] + ATP = O-phospho-L-threonyl-[protein] + ADP + H(+). Its activity is regulated as follows. May be regulated by calcium or a calmodulin-like protein. Plays an essential role in proper timing of early development events. The sequence is that of Serine/threonine-protein kinase Pkn1 (pkn1) from Myxococcus xanthus.